Here is a 2592-residue protein sequence, read N- to C-terminus: 6-hydroxymellein synthase cdmE (2592 aa).

Residues 1–11 show a composition bias toward basic and acidic residues; the sequence is MVLHPSDRRFP. Residues 1–25 form a disordered region; that stretch reads MVLHPSDRRFPETNGVGGHSKDSSA. One can recognise a Ketosynthase family 3 (KS3) domain in the interval 32–456; that stretch reads LEPLAIVGFA…GTNAHVVLES (425 aa). Residues Cys205, His340, and His379 each act as for beta-ketoacyl synthase activity in the active site. The tract at residues 589 to 910 is malonyl-CoA:ACP transacylase (MAT) domain; it reads VFTGQGAQWP…RYSHTITRKK (322 aa). Residues 978–1113 form an N-terminal hotdog fold region; that stretch reads HELLGSPDPD…GFIESKCESD (136 aa). The tract at residues 978-1291 is dehydratase (DH) domain; it reads HELLGSPDPD…IRGTELCLLS (314 aa). The PKS/mFAS DH domain occupies 978-1296; sequence HELLGSPDPD…LCLLSAGRGD (319 aa). The segment at 1140–1296 is C-terminal hotdog fold; that stretch reads TQIGSISAFY…LCLLSAGRGD (157 aa). The S-adenosyl-L-methionine site is built by Ile1462 and Glu1484. The methyltransferase (CMeT) domain stretch occupies residues 1483–1591; that stretch reads LEIGTGFGSV…HSLLKPGGKL (109 aa). An enoyl reductase (ER) domain region spans residues 1887–2199; sequence GLLVWSDDEA…NDSNMDTAVI (313 aa). The segment at 2223–2398 is ketoreductase (KR) domain; sequence ATYVIAGGLG…IPGMSVNLGN (176 aa). The 78-residue stretch at 2509 to 2586 folds into the Carrier domain; the sequence is VAASHVTEAI…GLSEKIARQS (78 aa). The residue at position 2546 (Ser2546) is an O-(pantetheine 4'-phosphoryl)serine.

It carries out the reaction 5 malonyl-CoA + AH2 + 5 H(+) = 6-hydroxymellein + A + 5 CO2 + 5 CoA + H2O. The protein operates within secondary metabolite biosynthesis; terpenoid biosynthesis. In terms of biological role, highly reducing polyketide synthase; part of the gene cluster that mediates the biosynthesis of chrodrimanin B, a meroterpenoid that acts as a potent blocker of insect GABA-gated chloride channels. The first step of the pathway is the biosynthesis of 6-hydroxymellein by the polyketide synthase cdmE. The prenyltransferase cdmH acts as a 6-hydroxymellein 5-farnesyltransferase and produces the hydrophobic metabolite verruculide C. The FAD-dependent monooxygenase cdmI further converts verruculide C into verruculide B. The terpene cyclase cdmG then produced the pentacyclic molecule 3-hydroxypentacecilide A, the backbone structure of chrodrimanin B, via folding the farnesyl moiety of the substrate into the chair-boat conformation. The short-chain dehydrogenase/reductase cdmF functions as the 3-OH dehydrogenase that oxidizes the C-3 hydroxyl group of 3-hydroxypentacecilide A and produces chrodrimanin C, the dehydrogenated product of 3-hydroxypentacecilide A. The cytochrome P450 monooxygenase cdmJ then accepts both 3-hydroxypentacecilide A and chrodrimanin C and functions as a C-7-beta-hydroxylase to produce respectively chrodrimanin H and chrodrimanin F. The dioxygenase cdmA accepts chrodrimanin H to afford chrodrimanin E, which is further transformed to chrodrimanin A by the dioxygenase cdmD. CdmA can also accept chrodrimanin C as substrate to convert it into verruculide A, which is further converted into chrodrimanin T by cdmD. The last step of the biosynthesis is proposed to be performed by the acetyltransferase cdmC which acetylates chrodrimanin A to yield chrodrimanin B. The pathway may also lead to the production of additional shunt products, including chrodrimanins T and U. The sequence is that of 6-hydroxymellein synthase cdmE from Talaromyces verruculosus (Penicillium verruculosum).